A 432-amino-acid polypeptide reads, in one-letter code: Adenylosuccinate synthetase 1 (432 aa).

GTP-binding positions include 12-18 (GDEGKGR) and 40-42 (GHT). The Proton acceptor role is filled by Asp-13. Residues Asp-13 and Gly-40 each contribute to the Mg(2+) site. Residues 13–16 (DEGK), 38–41 (NAGH), Thr-128, Arg-142, Gln-222, Thr-237, and Arg-301 each bind IMP. The Proton donor role is filled by His-41. Residue 297–303 (TNTGRPR) coordinates substrate. GTP is bound by residues Arg-303, 329-331 (KLD), and 411-413 (STG).

This sequence belongs to the adenylosuccinate synthetase family. Homodimer. The cofactor is Mg(2+).

It localises to the cytoplasm. The enzyme catalyses IMP + L-aspartate + GTP = N(6)-(1,2-dicarboxyethyl)-AMP + GDP + phosphate + 2 H(+). It functions in the pathway purine metabolism; AMP biosynthesis via de novo pathway; AMP from IMP: step 1/2. Functionally, plays an important role in the de novo pathway of purine nucleotide biosynthesis. Catalyzes the first committed step in the biosynthesis of AMP from IMP. This is Adenylosuccinate synthetase 1 from Chromobacterium violaceum (strain ATCC 12472 / DSM 30191 / JCM 1249 / CCUG 213 / NBRC 12614 / NCIMB 9131 / NCTC 9757 / MK).